The sequence spans 206 residues: Smr domain-containing protein C11H11.03c (206 aa).

In terms of domain architecture, Smr spans 75-150; it reads IDLHGLYIDE…NEGRIYVYLP (76 aa).

Its subcellular location is the cytoplasm. It is found in the nucleus. The protein is Smr domain-containing protein C11H11.03c of Schizosaccharomyces pombe (strain 972 / ATCC 24843) (Fission yeast).